The following is a 570-amino-acid chain: Endo-1,4-beta-xylanase 4 (570 aa).

An N-terminal signal peptide occupies residues 1-24 (MKRFNYGFFHLVLFLISLLLLGSG). N92, N190, and N300 each carry an N-linked (GlcNAc...) asparagine glycan. In terms of domain architecture, GH10 spans 195–494 (EGSVISIEQI…TQAGDLIDKL (300 aa)). E325 acts as the Proton donor in catalysis. An N-linked (GlcNAc...) asparagine glycan is attached at N339. E432 functions as the Nucleophile in the catalytic mechanism. A glycan (N-linked (GlcNAc...) asparagine) is linked at N545.

It belongs to the glycosyl hydrolase 10 (cellulase F) family.

It carries out the reaction Endohydrolysis of (1-&gt;4)-beta-D-xylosidic linkages in xylans.. It participates in glycan degradation; xylan degradation. In terms of biological role, binds to and hydrolyzes insoluble and soluble xylan substrates. The polypeptide is Endo-1,4-beta-xylanase 4 (Arabidopsis thaliana (Mouse-ear cress)).